The sequence spans 545 residues: Chaperonin GroEL 2 (545 aa).

Residues 29–32 (TLGP), 86–90 (DGTTT), Gly-413, 479–481 (NAA), and Asp-495 contribute to the ATP site.

This sequence belongs to the chaperonin (HSP60) family. In terms of assembly, forms a cylinder of 14 subunits composed of two heptameric rings stacked back-to-back. Interacts with the co-chaperonin GroES.

The protein localises to the cytoplasm. The enzyme catalyses ATP + H2O + a folded polypeptide = ADP + phosphate + an unfolded polypeptide.. Functionally, together with its co-chaperonin GroES, plays an essential role in assisting protein folding. The GroEL-GroES system forms a nano-cage that allows encapsulation of the non-native substrate proteins and provides a physical environment optimized to promote and accelerate protein folding. This chain is Chaperonin GroEL 2, found in Prochlorococcus marinus (strain MIT 9312).